We begin with the raw amino-acid sequence, 275 residues long: Adaptin ear-binding coat-associated protein 1 (275 aa).

Residues 170–191 (KGGASKPRTARGGGLSLLPPPP) form a disordered region. At R180 the chain carries Omega-N-methylarginine. T211 bears the Phosphothreonine mark. Short sequence motifs (WXXF motif) lie at residues 252–255 (WGDF) and 272–275 (WVQF). The segment at 254–275 (DFSTASSSVPNQAPQPSNWVQF) is disordered. Residues 256–275 (STASSSVPNQAPQPSNWVQF) show a composition bias toward polar residues.

It belongs to the NECAP family. As to quaternary structure, interacts with AP1G1 and AP2A1 components of the adapter protein complexes AP-1 and AP-2. Interacts with the GAE domain proteins GGA1, GGA2 and GGA3.

It is found in the cytoplasmic vesicle. The protein resides in the clathrin-coated vesicle membrane. Its subcellular location is the cell membrane. In terms of biological role, involved in endocytosis. The chain is Adaptin ear-binding coat-associated protein 1 (NECAP1) from Homo sapiens (Human).